Reading from the N-terminus, the 399-residue chain is CCA-adding enzyme (399 aa).

ATP contacts are provided by Gly-32 and Arg-35. Residues Gly-32 and Arg-35 each contribute to the CTP site. Mg(2+) contacts are provided by Asp-45 and Asp-47. ATP contacts are provided by Arg-116, Asp-159, Arg-162, Arg-165, and Arg-168. CTP is bound by residues Arg-116, Asp-159, Arg-162, Arg-165, and Arg-168.

This sequence belongs to the tRNA nucleotidyltransferase/poly(A) polymerase family. Bacterial CCA-adding enzyme type 3 subfamily. Homodimer. The cofactor is Mg(2+).

The enzyme catalyses a tRNA precursor + 2 CTP + ATP = a tRNA with a 3' CCA end + 3 diphosphate. It carries out the reaction a tRNA with a 3' CCA end + 2 CTP + ATP = a tRNA with a 3' CCACCA end + 3 diphosphate. Its function is as follows. Catalyzes the addition and repair of the essential 3'-terminal CCA sequence in tRNAs without using a nucleic acid template. Adds these three nucleotides in the order of C, C, and A to the tRNA nucleotide-73, using CTP and ATP as substrates and producing inorganic pyrophosphate. tRNA 3'-terminal CCA addition is required both for tRNA processing and repair. Also involved in tRNA surveillance by mediating tandem CCA addition to generate a CCACCA at the 3' terminus of unstable tRNAs. While stable tRNAs receive only 3'-terminal CCA, unstable tRNAs are marked with CCACCA and rapidly degraded. The protein is CCA-adding enzyme of Streptococcus pneumoniae serotype 4 (strain ATCC BAA-334 / TIGR4).